Reading from the N-terminus, the 1004-residue chain is MPGKLRVHELAKQLGITSKELLATLKDKGEFVKTASSTIEPPVVKRMQEHYGSSGSDKSDTAAKPAAAKPAAPKPAASAAPKPGAPAKPAAPAAKPAPAAPSAASAAKPGAAPKPGVQAKPAAAAKPGAPAKPAAPAAPSAAKSGSAPKPAAAAKPAFSGPTPGDAAKKAEPAAKPGAEAPRPGGMPRPMGKPAPKPGARAPRVANNPFSTGGGERPAPRPGGGPRPGGGPRPGGGPRPQGQGRPGGQRDGQRDGQRDGQGNRGGQRQGAGAGGPRPQGGPRPQGGSRPQGGSAQGAQGAPSQERQGGGRRPSPAMMPPTPGQMPAKAPGKGGRGGQAGGGAGGGFNRGGGTGGGAGRGGRRGGTAGAFGRPGGAPRRGRKSKRQKRNEYESMQAPNVIGGVRLPDGKGATIRLARGASLADFADKIGADAAALVQALFNLGEMVTATASVSDETLQLLGEEMNYKVQVVSPEDEDRELLESFDLQFGEDEGGEADLAKRPPVVTVMGHVDHGKTRLLDTIRKANVGSDEAGGITQGIGAYQVKVNVEDTERTITFLDTPGHEAFTAMRARGAKSTDIAVLVVAADDGVMPQTVEAINHAKAADVPIVVAVNKIDKPEASPEKIRGQLTEYGLIPEEYGGDTIFVDISAKQGLNIDELLASVCLTADAELDLVANPEMDAQGVAIEAHLDRGRGPVATVIVQRGTLRVGDSIVAGDTYGRVRRMVDEYGRDVEEAGPSRPVQVQGLNGVPGAGDNLLVVEDDRIARQIANQRNARKRNALAARSRKRVSLEDLDSVLKEHSTLNLILKGDNAGSVEALEEALLKIEMDDEVQLNIIDRGVGAVTQTNVTLAAASDAVIIAFNVRAEGKATEEANAEGVDVRYYTIIYRAIEEVEAALKGMLKPIYEERVIGHAEIRAIFKASSVGLIAGCMVEDGKVRRNATVRIIRDGNVIAENAKIVSLRREKDDATEVSAGYECGMVLSYPDISVDDKIEVYEMVEVPREA.

Residues 36-393 (SSTIEPPVVK…RQKRNEYESM (358 aa)) form a disordered region. 2 stretches are compositionally biased toward low complexity: residues 62–157 (AAKP…AKPA) and 173–183 (AAKPGAEAPRP). Composition is skewed to pro residues over residues 184–196 (GGMPRPMGKPAPK) and 219–236 (PRPGGGPRPGGGPRPGGG). Gly residues-rich tracts occupy residues 237–249 (PRPQGQGRPGGQR) and 261–277 (GNRGGQRQGAGAGGPRP). Residues 279–303 (GGPRPQGGSRPQGGSAQGAQGAPSQ) show a composition bias toward low complexity. Residues 330–373 (GKGGRGGQAGGGAGGGFNRGGGTGGGAGRGGRRGGTAGAFGRPG) are compositionally biased toward gly residues. Basic residues predominate over residues 377 to 386 (RRGRKSKRQK). In terms of domain architecture, tr-type G spans 499–671 (KRPPVVTVMG…VCLTADAELD (173 aa)). A G1 region spans residues 508–515 (GHVDHGKT). 508–515 (GHVDHGKT) lines the GTP pocket. A G2 region spans residues 533–537 (GITQG). Residues 558–561 (DTPG) form a G3 region. Residues 558–562 (DTPGH) and 612–615 (NKID) contribute to the GTP site. Positions 612–615 (NKID) are G4. The G5 stretch occupies residues 648-650 (SAK).

Belongs to the TRAFAC class translation factor GTPase superfamily. Classic translation factor GTPase family. IF-2 subfamily.

It localises to the cytoplasm. One of the essential components for the initiation of protein synthesis. Protects formylmethionyl-tRNA from spontaneous hydrolysis and promotes its binding to the 30S ribosomal subunits. Also involved in the hydrolysis of GTP during the formation of the 70S ribosomal complex. This is Translation initiation factor IF-2 from Corynebacterium glutamicum (strain ATCC 13032 / DSM 20300 / JCM 1318 / BCRC 11384 / CCUG 27702 / LMG 3730 / NBRC 12168 / NCIMB 10025 / NRRL B-2784 / 534).